The following is an 863-amino-acid chain: Eukaryotic translation initiation factor 3 subunit C (863 aa).

The tract at residues 1 to 92 is disordered; it reads MSRFFRGGDD…VKSAKDKRFD (92 aa). Positions 16–53 are enriched in acidic residues; it reads SSDEEELYSTSEEEEEEDQDQEESSEEEDEEESSDEDE. Basic and acidic residues predominate over residues 79 to 92; that stretch reads GATKVKSAKDKRFD. A PCI domain is found at 604-778; the sequence is FHMHINLELL…KTVIFRKGVE (175 aa). The segment at 808-863 is disordered; that stretch reads TQGSANAFSRKDGRQGGQRGGGQRSGRGGARAGGNAQRQAGGTQFTGGALGAAVRG. Residues 822–839 are compositionally biased toward gly residues; sequence QGGQRGGGQRSGRGGARA. Low complexity predominate over residues 840 to 850; sequence GGNAQRQAGGT.

Belongs to the eIF-3 subunit C family. As to quaternary structure, component of the eukaryotic translation initiation factor 3 (eIF-3) complex.

It localises to the cytoplasm. Component of the eukaryotic translation initiation factor 3 (eIF-3) complex, which is involved in protein synthesis of a specialized repertoire of mRNAs and, together with other initiation factors, stimulates binding of mRNA and methionyl-tRNAi to the 40S ribosome. The eIF-3 complex specifically targets and initiates translation of a subset of mRNAs involved in cell proliferation. This chain is Eukaryotic translation initiation factor 3 subunit C, found in Chaetomium globosum (strain ATCC 6205 / CBS 148.51 / DSM 1962 / NBRC 6347 / NRRL 1970) (Soil fungus).